The chain runs to 70 residues: DNA-directed RNA polymerase subunit epsilon (70 aa).

This sequence belongs to the RNA polymerase subunit epsilon family. In terms of assembly, RNAP is composed of a core of 2 alpha, a beta and a beta' subunit. The core is associated with a delta subunit, and at least one of epsilon or omega. When a sigma factor is associated with the core the holoenzyme is formed, which can initiate transcription.

It carries out the reaction RNA(n) + a ribonucleoside 5'-triphosphate = RNA(n+1) + diphosphate. In terms of biological role, a non-essential component of RNA polymerase (RNAP). The polypeptide is DNA-directed RNA polymerase subunit epsilon (Bacillus cereus (strain Q1)).